The following is a 163-amino-acid chain: MVRVGLQISATLENVDKLETSHPDYSFFLKLKCSNCGEQSDKWHDITESERVQQDSRNAAGFNFFMKCKMCSRENSIDIVDKSNAPYTADDSGAFKTIVVFECRGAEPVEFSPRVGWRVSSAENGQQFEEVDLSEDDWVEYDQKNNNSVGIYEFASKFIKLKK.

The Zn(2+) site is built by Cys33, Cys36, Cys68, and Cys71.

It belongs to the UPF0587 family.

The sequence is that of UPF0587 protein CG4646 from Drosophila melanogaster (Fruit fly).